A 257-amino-acid polypeptide reads, in one-letter code: Mediator of RNA polymerase II transcription subunit 7 (257 aa).

A disordered region spans residues 33–74 (EWQRQQNDEEIETKQEEADDKDEKDNEKQNETQDTVPPGELR). The span at 44 to 63 (ETKQEEADDKDEKDNEKQNE) shows a compositional bias: basic and acidic residues.

Belongs to the Mediator complex subunit 7 family. As to quaternary structure, component of the Mediator complex.

It is found in the nucleus. Component of the Mediator complex, a coactivator involved in the regulated transcription of nearly all RNA polymerase II-dependent genes. Mediator functions as a bridge to convey information from gene-specific regulatory proteins to the basal RNA polymerase II transcription machinery. Mediator is recruited to promoters by direct interactions with regulatory proteins and serves as a scaffold for the assembly of a functional preinitiation complex with RNA polymerase II and the general transcription factors. The sequence is that of Mediator of RNA polymerase II transcription subunit 7 (MED7) from Scheffersomyces stipitis (strain ATCC 58785 / CBS 6054 / NBRC 10063 / NRRL Y-11545) (Yeast).